Reading from the N-terminus, the 118-residue chain is MASLRVSCLVALMCMVVISAPMAEAAISCGTVSGALVPCLTYLKGGPGPSPQCCGGVKRLNGAARTTIDRRAACNCLKSSAGSISGLKPGNVATLPGKCGVRLPYTISTSTNCNTIRF.

An N-terminal signal peptide occupies residues 1-25 (MASLRVSCLVALMCMVVISAPMAEA). Disulfide bonds link Cys29–Cys76, Cys39–Cys53, Cys54–Cys99, and Cys74–Cys113.

The protein belongs to the plant LTP family.

Plant non-specific lipid-transfer proteins transfer phospholipids as well as galactolipids across membranes. May play a role in wax or cutin deposition in the cell walls of expanding epidermal cells and certain secretory tissues. The protein is Non-specific lipid-transfer protein 1 of Lens culinaris (Lentil).